Consider the following 248-residue polypeptide: MALLEICCYSMECALTAQRNGADRIELCAAPKEGGLTPSLGVLRSVREHITIPVHPIIRPRGGDFYYTDGEFAAMLEDIRLVRELGFPGLVTGVLTVDGDVDMSRMEKIMTAAGPLAVTFHRAFDMCANPFNALKNLADAGVARVLTSGQKADAAQGLSIIMELIAQGDAPIIMAGAGVRANNLQNFLDAGVREVHSSAGVLLPSPMRYRNQGLSMSADIQADEYSRYRVEGAAVAEMKGIIVRHQAK.

Belongs to the CutC family. In terms of assembly, homodimer.

Its subcellular location is the cytoplasm. The protein is PF03932 family protein CutC of Salmonella paratyphi B (strain ATCC BAA-1250 / SPB7).